The following is a 119-amino-acid chain: FAD-linked sulfhydryl oxidase (119 aa).

The region spanning 1 to 97 (MLHWGPKFWR…ISWSEYKNIY (97 aa)) is the ERV/ALR sulfhydryl oxidase domain. A disulfide bridge connects residues cysteine 44 and cysteine 47.

Belongs to the asfivirus B119L family. As to quaternary structure, interacts with A151R. Requires FAD as cofactor.

The protein localises to the host cytoplasm. It localises to the virion. It carries out the reaction 2 R'C(R)SH + O2 = R'C(R)S-S(R)CR' + H2O2. In terms of biological role, FAD-dependent sulfhydryl oxidase that catalyzes the formation of disulfide bonds in viral proteins produced in the cell cytoplasm. The protein is FAD-linked sulfhydryl oxidase of Ornithodoros (relapsing fever ticks).